A 211-amino-acid polypeptide reads, in one-letter code: Probable nicotinate-nucleotide adenylyltransferase (211 aa).

The protein belongs to the NadD family.

The catalysed reaction is nicotinate beta-D-ribonucleotide + ATP + H(+) = deamido-NAD(+) + diphosphate. Its pathway is cofactor biosynthesis; NAD(+) biosynthesis; deamido-NAD(+) from nicotinate D-ribonucleotide: step 1/1. In terms of biological role, catalyzes the reversible adenylation of nicotinate mononucleotide (NaMN) to nicotinic acid adenine dinucleotide (NaAD). The polypeptide is Probable nicotinate-nucleotide adenylyltransferase (Lactiplantibacillus plantarum (strain ATCC BAA-793 / NCIMB 8826 / WCFS1) (Lactobacillus plantarum)).